Reading from the N-terminus, the 357-residue chain is Tetraacyldisaccharide 4'-kinase (357 aa).

ATP is bound at residue threonine 49 to threonine 56.

The protein belongs to the LpxK family.

It carries out the reaction a lipid A disaccharide + ATP = a lipid IVA + ADP + H(+). It participates in glycolipid biosynthesis; lipid IV(A) biosynthesis; lipid IV(A) from (3R)-3-hydroxytetradecanoyl-[acyl-carrier-protein] and UDP-N-acetyl-alpha-D-glucosamine: step 6/6. Transfers the gamma-phosphate of ATP to the 4'-position of a tetraacyldisaccharide 1-phosphate intermediate (termed DS-1-P) to form tetraacyldisaccharide 1,4'-bis-phosphate (lipid IVA). This is Tetraacyldisaccharide 4'-kinase from Porphyromonas gingivalis (strain ATCC 33277 / DSM 20709 / CIP 103683 / JCM 12257 / NCTC 11834 / 2561).